We begin with the raw amino-acid sequence, 385 residues long: UPF0764 protein C16orf89 homolog (385 aa).

The signal sequence occupies residues 1–20 (MARLGLLLLLLLALPPHFSS). The segment at 344–385 (AHPEYYPNHGDPYSSSQSPASNYQDGAAGPDVQRTGRPLSVS) is disordered. Residues 356–367 (YSSSQSPASNYQ) show a composition bias toward polar residues.

Belongs to the UPF0764 family. As to quaternary structure, homodimer. In terms of processing, glycosylated. As to expression, predominantly expressed in thyroid tissue.

The protein resides in the secreted. This is UPF0764 protein C16orf89 homolog from Mus musculus (Mouse).